Consider the following 341-residue polypeptide: Methionine import ATP-binding protein MetN (341 aa).

Positions isoleucine 6–leucine 247 constitute an ABC transporter domain. Glycine 44–serine 51 lines the ATP pocket.

This sequence belongs to the ABC transporter superfamily. Methionine importer (TC 3.A.1.24) family. The complex is composed of two ATP-binding proteins (MetN), two transmembrane proteins (MetI) and a solute-binding protein (MetQ).

It localises to the cell inner membrane. It catalyses the reaction L-methionine(out) + ATP + H2O = L-methionine(in) + ADP + phosphate + H(+). The catalysed reaction is D-methionine(out) + ATP + H2O = D-methionine(in) + ADP + phosphate + H(+). Its function is as follows. Part of the ABC transporter complex MetNIQ involved in methionine import. Responsible for energy coupling to the transport system. This chain is Methionine import ATP-binding protein MetN, found in Protochlamydia amoebophila (strain UWE25).